A 79-amino-acid chain; its full sequence is Small serum protein 3 (79 aa).

Positions 1–19 are cleaved as a signal peptide; it reads MKVFFILIIFSFTLATCQG. 3 disulfide bridges follow: Cys21–Cys72, Cys39–Cys64, and Cys62–Cys71.

Its subcellular location is the secreted. Shows an slight inhibitory effect toward the metalloproteinase brevilysin H6, but does not inhibit the metalloproteinases thermolysin, HR1A and HR1B. The sequence is that of Small serum protein 3 from Protobothrops flavoviridis (Habu).